Consider the following 1021-residue polypeptide: Sodium/potassium-transporting ATPase subunit alpha-1 (1021 aa).

Positions 1-5 are excised as a propeptide; sequence MGKGA. Residues 1-11 are compositionally biased toward basic and acidic residues; it reads MGKGAGRDKYE. A disordered region spans residues 1 to 31; that stretch reads MGKGAGRDKYEPTATSEHGTKKKKAKERDMD. At 6–85 the chain is on the cytoplasmic side; it reads GRDKYEPTAT…NTLTPPPTTP (80 aa). Residue Tyr-10 is modified to Phosphotyrosine. Ser-16 carries the post-translational modification Phosphoserine; by PKC. The segment at 80-82 is phosphoinositide-3 kinase binding; the sequence is PPP. Residues 86–106 form a helical membrane-spanning segment; the sequence is EWVKFCRQLFGGFSLLLWIGS. Topologically, residues 107–129 are extracellular; sequence LLCFLAYGITSVMEGEPNSDNLY. A helical membrane pass occupies residues 130-150; sequence LGVVLAAVVIITGCFSYYQEA. Residues 151–286 are Cytoplasmic-facing; it reads KSSKIMESFK…GGKTPIAMEI (136 aa). The tract at residues 214–233 is disordered; that stretch reads SSLTGESEPQTRSPDFSNEN. Residues 287–306 form a helical membrane-spanning segment; sequence EHFIHLITGVAVFLGVSFFI. Residues 307-318 are Extracellular-facing; sequence LSLILEYTWLEA. Residues 319-336 form a helical membrane-spanning segment; the sequence is VIFLIGIIVANVPEGLLA. The Cytoplasmic portion of the chain corresponds to 337–770; sequence TVTVCLTLTA…EEGRLIFDNL (434 aa). Asp-374 (4-aspartylphosphate intermediate) is an active-site residue. ATP is bound at residue Lys-485. Mg(2+) is bound by residues Asp-715 and Asp-719. The chain crosses the membrane as a helical span at residues 771-790; it reads KKSIAYTLTSNIPEITPFLI. Residues 791-800 lie on the Extracellular side of the membrane; that stretch reads FIIANIPLPL. A helical membrane pass occupies residues 801–821; sequence GTCTILCIDLGTDMVPAISLA. At 822–841 the chain is on the cytoplasmic side; that stretch reads YEQAESDIMKRQPRNPKTDK. A helical membrane pass occupies residues 842–864; sequence LVNERLISMAYGQIGMIQALGGF. At 865–916 the chain is on the extracellular side; the sequence is FTYFVIMAENGFLPSGLVGIRLQWDDRWINDVEDSYGQQWTFEQRKIVEFTC. A helical transmembrane segment spans residues 917 to 936; the sequence is HTAFFVSIVVVQWADLIICK. The Cytoplasmic portion of the chain corresponds to 937-949; the sequence is TRRNSVFQQGMKN. Ser-941 carries the post-translational modification Phosphoserine; by PKA. Residues 950–968 traverse the membrane as a helical segment; sequence KILIFGLFEETALAAFLSY. Residues 969 to 983 are Extracellular-facing; that stretch reads CPGMDVALRMYPLKP. A helical membrane pass occupies residues 984–1004; it reads TWWFCAFPYSLLIFLYDEIRK. The Cytoplasmic segment spans residues 1005–1021; sequence LIIRRNPGGWVERETYY.

The protein belongs to the cation transport ATPase (P-type) (TC 3.A.3) family. Type IIC subfamily. As to quaternary structure, the sodium/potassium-transporting ATPase is composed of a catalytic alpha subunit, an auxiliary non-catalytic beta subunit and an additional regulatory subunit. In terms of processing, phosphorylation on Tyr-10 modulates pumping activity.

The protein resides in the cell membrane. The protein localises to the sarcolemma. It carries out the reaction K(+)(out) + Na(+)(in) + ATP + H2O = K(+)(in) + Na(+)(out) + ADP + phosphate + H(+). Its function is as follows. This is the catalytic component of the active enzyme, which catalyzes the hydrolysis of ATP coupled with the exchange of sodium and potassium ions across the plasma membrane. This action creates the electrochemical gradient of sodium and potassium ions, providing the energy for active transport of various nutrients. In Gallus gallus (Chicken), this protein is Sodium/potassium-transporting ATPase subunit alpha-1 (ATP1A1).